The sequence spans 1465 residues: DNA polymerase III PolC-type (1465 aa).

Positions 427–583 (YVVFDVETTG…YDAEATGRLL (157 aa)) constitute an Exonuclease domain.

The protein belongs to the DNA polymerase type-C family. PolC subfamily.

The protein localises to the cytoplasm. It catalyses the reaction DNA(n) + a 2'-deoxyribonucleoside 5'-triphosphate = DNA(n+1) + diphosphate. Required for replicative DNA synthesis. This DNA polymerase also exhibits 3' to 5' exonuclease activity. The sequence is that of DNA polymerase III PolC-type from Streptococcus pyogenes serotype M18 (strain MGAS8232).